Here is a 28-residue protein sequence, read N- to C-terminus: Potassium channel toxin alpha-KTx 9.3 (28 aa).

3 disulfides stabilise this stretch: Cys3/Cys19, Cys6/Cys24, and Cys10/Cys26.

This sequence belongs to the short scorpion toxin superfamily. Potassium channel inhibitor family. Alpha-KTx 09 subfamily. Expressed by the venom gland.

It is found in the secreted. Inhibits voltage-gated potassium channels. The chain is Potassium channel toxin alpha-KTx 9.3 from Aegaeobuthus nigrocinctus (Scorpion).